We begin with the raw amino-acid sequence, 364 residues long: tRNA/tmRNA (uracil-C(5))-methyltransferase (364 aa).

Positions 186, 214, 219, 235, and 295 each coordinate S-adenosyl-L-methionine. C320 (nucleophile) is an active-site residue. E354 (proton acceptor) is an active-site residue.

This sequence belongs to the class I-like SAM-binding methyltransferase superfamily. RNA M5U methyltransferase family. TrmA subfamily.

It carries out the reaction uridine(54) in tRNA + S-adenosyl-L-methionine = 5-methyluridine(54) in tRNA + S-adenosyl-L-homocysteine + H(+). The enzyme catalyses uridine(341) in tmRNA + S-adenosyl-L-methionine = 5-methyluridine(341) in tmRNA + S-adenosyl-L-homocysteine + H(+). Its function is as follows. Dual-specificity methyltransferase that catalyzes the formation of 5-methyluridine at position 54 (m5U54) in all tRNAs, and that of position 341 (m5U341) in tmRNA (transfer-mRNA). In Azoarcus sp. (strain BH72), this protein is tRNA/tmRNA (uracil-C(5))-methyltransferase.